The primary structure comprises 157 residues: Small ribosomal subunit protein uS7c (157 aa).

Belongs to the universal ribosomal protein uS7 family. Part of the 30S ribosomal subunit.

It localises to the plastid. The protein localises to the organellar chromatophore. Functionally, one of the primary rRNA binding proteins, it binds directly to 16S rRNA where it nucleates assembly of the head domain of the 30S subunit. In Paulinella chromatophora, this protein is Small ribosomal subunit protein uS7c (rps7).